The sequence spans 83 residues: Cell division topological specificity factor (83 aa).

The protein belongs to the MinE family.

Functionally, prevents the cell division inhibition by proteins MinC and MinD at internal division sites while permitting inhibition at polar sites. This ensures cell division at the proper site by restricting the formation of a division septum at the midpoint of the long axis of the cell. This is Cell division topological specificity factor from Buchnera aphidicola subsp. Schizaphis graminum (strain Sg).